The following is a 427-amino-acid chain: Adenylosuccinate synthetase (427 aa).

GTP-binding positions include 12–18 (GDEGKGK) and 40–42 (GHT). D13 functions as the Proton acceptor in the catalytic mechanism. Mg(2+)-binding residues include D13 and G40. IMP is bound by residues 13-16 (DEGK), 38-41 (NAGH), T128, R142, Q223, T238, and R302. The active-site Proton donor is the H41. 298–304 (TVTGRAR) serves as a coordination point for substrate. GTP contacts are provided by residues R304, 330–332 (RLD), and 412–414 (SVG).

It belongs to the adenylosuccinate synthetase family. Homodimer. Mg(2+) serves as cofactor.

Its subcellular location is the cytoplasm. It catalyses the reaction IMP + L-aspartate + GTP = N(6)-(1,2-dicarboxyethyl)-AMP + GDP + phosphate + 2 H(+). It participates in purine metabolism; AMP biosynthesis via de novo pathway; AMP from IMP: step 1/2. Functionally, plays an important role in the de novo pathway of purine nucleotide biosynthesis. Catalyzes the first committed step in the biosynthesis of AMP from IMP. The sequence is that of Adenylosuccinate synthetase from Brachyspira hyodysenteriae (strain ATCC 49526 / WA1).